A 305-amino-acid polypeptide reads, in one-letter code: Ribonuclease BN (305 aa).

7 residues coordinate Zn(2+): H64, H66, D68, H69, H141, D212, and H270. The active-site Proton acceptor is D68.

It belongs to the RNase Z family. RNase BN subfamily. In terms of assembly, homodimer. Requires Zn(2+) as cofactor.

Its function is as follows. Zinc phosphodiesterase, which has both exoribonuclease and endoribonuclease activities. In Escherichia coli O127:H6 (strain E2348/69 / EPEC), this protein is Ribonuclease BN.